A 194-amino-acid polypeptide reads, in one-letter code: dCTP deaminase (194 aa).

Residues 110–115 (RSSLAR), Asp-128, 136–138 (VLE), Tyr-171, Lys-178, and Gln-182 each bind dCTP. The active-site Proton donor/acceptor is the Glu-138. Positions 174-194 (RKSSKYKDQQEAVASRISQDK) are disordered.

The protein belongs to the dCTP deaminase family. As to quaternary structure, homotrimer.

The catalysed reaction is dCTP + H2O + H(+) = dUTP + NH4(+). The protein operates within pyrimidine metabolism; dUMP biosynthesis; dUMP from dCTP (dUTP route): step 1/2. Catalyzes the deamination of dCTP to dUTP. The protein is dCTP deaminase of Shewanella frigidimarina (strain NCIMB 400).